Here is an 830-residue protein sequence, read N- to C-terminus: DNA gyrase subunit A (830 aa).

Residues 34-514 enclose the Topo IIA-type catalytic domain; the sequence is LPDVRDGLKP…NHSDINMEDL (481 aa). Catalysis depends on Tyr-122, which acts as the O-(5'-phospho-DNA)-tyrosine intermediate. The GyrA-box signature appears at 541 to 547; the sequence is QRRGGKG.

Belongs to the type II topoisomerase GyrA/ParC subunit family. Heterotetramer, composed of two GyrA and two GyrB chains. In the heterotetramer, GyrA contains the active site tyrosine that forms a transient covalent intermediate with DNA, while GyrB binds cofactors and catalyzes ATP hydrolysis.

It localises to the cytoplasm. It carries out the reaction ATP-dependent breakage, passage and rejoining of double-stranded DNA.. Its function is as follows. A type II topoisomerase that negatively supercoils closed circular double-stranded (ds) DNA in an ATP-dependent manner to modulate DNA topology and maintain chromosomes in an underwound state. Negative supercoiling favors strand separation, and DNA replication, transcription, recombination and repair, all of which involve strand separation. Also able to catalyze the interconversion of other topological isomers of dsDNA rings, including catenanes and knotted rings. Type II topoisomerases break and join 2 DNA strands simultaneously in an ATP-dependent manner. The polypeptide is DNA gyrase subunit A (Buchnera aphidicola subsp. Acyrthosiphon pisum (strain APS) (Acyrthosiphon pisum symbiotic bacterium)).